Here is a 510-residue protein sequence, read N- to C-terminus: Cobyric acid synthase (510 aa).

The GATase cobBQ-type domain maps to 249–458 (CFKVRVLVYP…LHGLFDSPDA (210 aa)). C336 serves as the catalytic Nucleophile. The active site involves H450.

Belongs to the CobB/CobQ family. CobQ subfamily.

It participates in cofactor biosynthesis; adenosylcobalamin biosynthesis. In terms of biological role, catalyzes amidations at positions B, D, E, and G on adenosylcobyrinic A,C-diamide. NH(2) groups are provided by glutamine, and one molecule of ATP is hydrogenolyzed for each amidation. This chain is Cobyric acid synthase, found in Shewanella oneidensis (strain ATCC 700550 / JCM 31522 / CIP 106686 / LMG 19005 / NCIMB 14063 / MR-1).